Consider the following 96-residue polypeptide: UPF0235 protein Acid345_4205 (96 aa).

Belongs to the UPF0235 family.

The chain is UPF0235 protein Acid345_4205 from Koribacter versatilis (strain Ellin345).